A 337-amino-acid chain; its full sequence is Glyceraldehyde-3-phosphate dehydrogenase (337 aa).

NAD(+) is bound by residues 12–13 (RI), Asp34, and Arg79. D-glyceraldehyde 3-phosphate is bound by residues 150-152 (SCT), Thr181, 210-211 (TG), and Arg233. Cys151 (nucleophile) is an active-site residue. NAD(+) is bound at residue Asn315.

This sequence belongs to the glyceraldehyde-3-phosphate dehydrogenase family. In terms of assembly, homotetramer.

Its subcellular location is the cytoplasm. The enzyme catalyses D-glyceraldehyde 3-phosphate + phosphate + NAD(+) = (2R)-3-phospho-glyceroyl phosphate + NADH + H(+). It functions in the pathway carbohydrate degradation; glycolysis; pyruvate from D-glyceraldehyde 3-phosphate: step 1/5. The chain is Glyceraldehyde-3-phosphate dehydrogenase (GPD-1) from Claviceps purpurea (strain 20.1) (Ergot fungus).